The sequence spans 184 residues: ATP synthase subunit b (184 aa).

Residues 4-24 form a helical membrane-spanning segment; that stretch reads LSVLFALVASPALAASGPFFS.

The protein belongs to the ATPase B chain family. In terms of assembly, F-type ATPases have 2 components, F(1) - the catalytic core - and F(0) - the membrane proton channel. F(1) has five subunits: alpha(3), beta(3), gamma(1), delta(1), epsilon(1). F(0) has three main subunits: a(1), b(2) and c(10-14). The alpha and beta chains form an alternating ring which encloses part of the gamma chain. F(1) is attached to F(0) by a central stalk formed by the gamma and epsilon chains, while a peripheral stalk is formed by the delta and b chains.

The protein resides in the cell inner membrane. Functionally, f(1)F(0) ATP synthase produces ATP from ADP in the presence of a proton or sodium gradient. F-type ATPases consist of two structural domains, F(1) containing the extramembraneous catalytic core and F(0) containing the membrane proton channel, linked together by a central stalk and a peripheral stalk. During catalysis, ATP synthesis in the catalytic domain of F(1) is coupled via a rotary mechanism of the central stalk subunits to proton translocation. Component of the F(0) channel, it forms part of the peripheral stalk, linking F(1) to F(0). The polypeptide is ATP synthase subunit b (Paracoccus denitrificans (strain Pd 1222)).